Consider the following 293-residue polypeptide: ATP synthase subunit a (293 aa).

The next 8 helical transmembrane spans lie at 39–59 (QVFGIFVVFIVLLTLFLVYWI), 73–93 (FVLLMQMLFVWAQDTTADLIG), 102–122 (YFLMLLLYLVSSNLIGLLGGI), 128–148 (SLTFTFSLGLATFLGIVIMGI), 172–192 (TLIPNPLSFLGEFAPLFSISL), 198–218 (ILGGTLILALFYNFWFFAFST), 224–244 (LALSLGAIFAGILTPALHVYF), and 245–265 (DVVVGTLQGYVFVMLTYNYWA).

It belongs to the ATPase A chain family. F-type ATPases have 2 components, CF(1) - the catalytic core - and CF(0) - the membrane proton channel. CF(1) has five subunits: alpha(3), beta(3), gamma(1), delta(1), epsilon(1). CF(0) has three main subunits: a(1), b(2) and c(9-12). The alpha and beta chains form an alternating ring which encloses part of the gamma chain. CF(1) is attached to CF(0) by a central stalk formed by the gamma and epsilon chains, while a peripheral stalk is formed by the delta and b chains.

It localises to the cell membrane. Its function is as follows. Key component of the proton channel; it plays a direct role in the translocation of protons across the membrane. The protein is ATP synthase subunit a of Mycoplasma pneumoniae (strain ATCC 29342 / M129 / Subtype 1) (Mycoplasmoides pneumoniae).